Here is a 271-residue protein sequence, read N- to C-terminus: Protein CDV3 homolog (271 aa).

Residues 37-47 (KREVVKPKKPE) show a composition bias toward basic and acidic residues. 2 disordered regions span residues 37–151 (KREV…GHGP) and 186–271 (SQQA…DEAS). A compositionally biased stretch (low complexity) spans 48–61 (VAAGGVAVVGENEN). Acidic residues predominate over residues 73-82 (VEEEWKEFEE). Residues 95–114 (QLSTISSARSRTAQESSESQ) show a composition bias toward polar residues. A Phosphoserine modification is found at Ser-134. Residues 224–242 (RPEEQRKKKNEPAFEEVRH) are compositionally biased toward basic and acidic residues.

Belongs to the CDV3 family.

The polypeptide is Protein CDV3 homolog (Drosophila melanogaster (Fruit fly)).